We begin with the raw amino-acid sequence, 279 residues long: Lectin 9 (279 aa).

The first 23 residues, 1–23 (MALSSALIKIFITFLFLQNHVNS), serve as a signal peptide directing secretion. Asparagine 116, asparagine 139, asparagine 235, and asparagine 272 each carry an N-linked (GlcNAc...) asparagine glycan.

The protein belongs to the leguminous lectin family.

In terms of biological role, may be involved in arbuscular mycorrhizal (AM) symbiosis with AM fungi. The polypeptide is Lectin 9 (Medicago truncatula (Barrel medic)).